The sequence spans 288 residues: Nucleotide-binding protein AHA_3920 (288 aa).

Position 8–15 (8–15 (GRSGSGKT)) interacts with ATP. 56 to 59 (DVRN) lines the GTP pocket.

This sequence belongs to the RapZ-like family.

Functionally, displays ATPase and GTPase activities. The chain is Nucleotide-binding protein AHA_3920 from Aeromonas hydrophila subsp. hydrophila (strain ATCC 7966 / DSM 30187 / BCRC 13018 / CCUG 14551 / JCM 1027 / KCTC 2358 / NCIMB 9240 / NCTC 8049).